A 184-amino-acid chain; its full sequence is Large ribosomal subunit protein uL6 (184 aa).

This sequence belongs to the universal ribosomal protein uL6 family. Part of the 50S ribosomal subunit.

In terms of biological role, this protein binds to the 23S rRNA, and is important in its secondary structure. It is located near the subunit interface in the base of the L7/L12 stalk, and near the tRNA binding site of the peptidyltransferase center. The polypeptide is Large ribosomal subunit protein uL6 (Thermococcus gammatolerans (strain DSM 15229 / JCM 11827 / EJ3)).